The following is a 101-amino-acid chain: Small ribosomal subunit protein uS14 (101 aa).

This sequence belongs to the universal ribosomal protein uS14 family. As to quaternary structure, part of the 30S ribosomal subunit. Contacts proteins S3 and S10.

Its function is as follows. Binds 16S rRNA, required for the assembly of 30S particles and may also be responsible for determining the conformation of the 16S rRNA at the A site. In Actinobacillus succinogenes (strain ATCC 55618 / DSM 22257 / CCUG 43843 / 130Z), this protein is Small ribosomal subunit protein uS14.